Here is a 318-residue protein sequence, read N- to C-terminus: Replication factor C small subunit (318 aa).

43–50 (GSVGTGKT) contacts ATP.

Belongs to the activator 1 small subunits family. RfcS subfamily. In terms of assembly, heteromultimer composed of small subunits (RfcS) and large subunits (RfcL).

Part of the RFC clamp loader complex which loads the PCNA sliding clamp onto DNA. The polypeptide is Replication factor C small subunit (Thermoplasma volcanium (strain ATCC 51530 / DSM 4299 / JCM 9571 / NBRC 15438 / GSS1)).